Consider the following 275-residue polypeptide: Integrase homolog (275 aa).

Basic and acidic residues predominate over residues 88-111; the sequence is RVSQDRQAQGRERRSVLLPQERRG. The tract at residues 88–120 is disordered; that stretch reads RVSQDRQAQGRERRSVLLPQERRGSSGRQPLYS.

This sequence belongs to the 'phage' integrase family.

In terms of biological role, integrase-recombinase proteins are responsible for catalyzing strand exchange between DNA molecules and play an important role in the DNA replication. Its function is as follows. May be required for the formation of concatameric complex replicative intermediates and/or their resolution before encapsidation. This is Integrase homolog (INT) from Dryophytes versicolor (chameleon treefrog).